The primary structure comprises 289 residues: Enoyl-CoA delta isomerase 1, mitochondrial (289 aa).

The N-terminal 28 residues, 1–28 (MALAAARRLLLHAGSRLGRREAVDGARR), are a transit peptide targeting the mitochondrion. N6-acetyllysine; alternate is present on Lys-48. Lys-48 is subject to N6-succinyllysine; alternate. An N6-succinyllysine modification is found at Lys-71. The residue at position 76 (Lys-76) is an N6-acetyllysine. Substrate contacts are provided by residues 93–97 (AGLDL), Gly-140, and Asn-164. An N6-acetyllysine; alternate mark is found at Lys-222, Lys-229, Lys-255, and Lys-270. Residues Lys-222, Lys-229, Lys-255, and Lys-270 each carry the N6-succinyllysine; alternate modification. Lys-275 bears the N6-succinyllysine mark. Lys-283 bears the N6-acetyllysine; alternate mark. Position 283 is an N6-succinyllysine; alternate (Lys-283).

It belongs to the enoyl-CoA hydratase/isomerase family. In terms of assembly, homotrimer.

It is found in the mitochondrion matrix. The enzyme catalyses a (3Z)-enoyl-CoA = a 4-saturated (2E)-enoyl-CoA. It catalyses the reaction a (3E)-enoyl-CoA = a 4-saturated (2E)-enoyl-CoA. It carries out the reaction (3Z)-octenoyl-CoA = (2E)-octenoyl-CoA. The catalysed reaction is (2E)-tetradecenoyl-CoA = (3Z)-tetradecenoyl-CoA. The enzyme catalyses (3Z)-dodecenoyl-CoA = (2E)-dodecenoyl-CoA. It catalyses the reaction (3Z)-hexenoyl-CoA = (2E)-hexenoyl-CoA. It carries out the reaction (3Z)-decenoyl-CoA = (2E)-decenoyl-CoA. Its pathway is lipid metabolism; fatty acid beta-oxidation. In terms of biological role, key enzyme of fatty acid beta-oxidation. Able to isomerize both 3-cis (3Z) and 3-trans (3E) double bonds into the 2-trans (2E) form in a range of enoyl-CoA species, with a preference for (3Z)-enoyl-CoAs over (3E)-enoyl-CoAs. The catalytic efficiency of this enzyme is not affected by the fatty acyl chain length. The protein is Enoyl-CoA delta isomerase 1, mitochondrial of Mus musculus (Mouse).